A 582-amino-acid polypeptide reads, in one-letter code: MKQHTLQLEGVTLDVPNQNLSSNEKYARLINGLTADFKSGNVYAFMGTSGSGKTTTLETIAGLVPSGSRTGGRILVDGQERNPDEFPYEFAYGDQLGYIIDELTVEEFVYYYVVSSLPEESKERVREKMDEVLENLLNIGHIRHNKMKNISGGEQKRANLARTFTKMLLLEGELKVVLLDEPTSELDAGLALKLGEFLRDYARRSNSIVLVTVHQPGAELYNTFDNLLFMNNGEKLYLGPSRDFIKFLGTKGIHNDGGPETNMEFLFSLFTKGSKMSKKYEKQLEQIAKEMNEEKKEEKKLRTSDDTEINFIPNLYVSFQMAIRQIIIDWRNREILYSLAMPIAMALFLVTGKYIYKDFSIATIKASMLSLSLYYVMNPSGLMNDKHYVTEESNRKLYGAAEVWFSSLISDTLVSILKYCIFFGIIYAFGLISMDHAFLGQVLMYTLGGTVSSMLFRSMASPLSTLGKVFNTTMVLMFQLSGALLGAGALLGALTLWISVIPEGSIPQEEIDAFISNFFDSTGSTGSTSIFSKVGSWVIRFICLVPKVVRSFLRILFLMFHPFAFFHSSILDAEKSSYKLFF.

The region spanning 15–257 (VPNQNLSSNE…LGTKGIHNDG (243 aa)) is the ABC transporter domain. 47–54 (GTSGSGKT) serves as a coordination point for ATP. Residues 316–519 (YVSFQMAIRQ…EIDAFISNFF (204 aa)) enclose the ABC transmembrane type-2 domain. The next 6 membrane-spanning stretches (helical) occupy residues 335-355 (ILYS…GKYI), 359-378 (FSIA…YVMN), 412-432 (TLVS…FGLI), 436-456 (HAFL…SMLF), 482-502 (GALL…SVIP), and 551-571 (SFLR…SSIL).

Belongs to the ABC transporter superfamily.

The protein localises to the membrane. The sequence is that of ABC transporter-like protein ECU11_1340 from Encephalitozoon cuniculi (strain GB-M1) (Microsporidian parasite).